Reading from the N-terminus, the 359-residue chain is DNA polymerase IV (359 aa).

The UmuC domain maps to 4–184; it reads IVHVDMDAFY…LKVNRIPGVG (181 aa). Mg(2+)-binding residues include Asp8 and Asp102. Glu103 is a catalytic residue.

The protein belongs to the DNA polymerase type-Y family. As to quaternary structure, monomer. Mg(2+) is required as a cofactor.

The protein localises to the cytoplasm. The catalysed reaction is DNA(n) + a 2'-deoxyribonucleoside 5'-triphosphate = DNA(n+1) + diphosphate. Poorly processive, error-prone DNA polymerase involved in untargeted mutagenesis. Copies undamaged DNA at stalled replication forks, which arise in vivo from mismatched or misaligned primer ends. These misaligned primers can be extended by PolIV. Exhibits no 3'-5' exonuclease (proofreading) activity. May be involved in translesional synthesis, in conjunction with the beta clamp from PolIII. In Xanthomonas oryzae pv. oryzae (strain MAFF 311018), this protein is DNA polymerase IV.